Consider the following 132-residue polypeptide: Holo-[acyl-carrier-protein] synthase (132 aa).

Mg(2+)-binding residues include Asp8 and Glu64.

This sequence belongs to the P-Pant transferase superfamily. AcpS family. It depends on Mg(2+) as a cofactor.

The protein resides in the cytoplasm. The enzyme catalyses apo-[ACP] + CoA = holo-[ACP] + adenosine 3',5'-bisphosphate + H(+). Transfers the 4'-phosphopantetheine moiety from coenzyme A to a Ser of acyl-carrier-protein. The protein is Holo-[acyl-carrier-protein] synthase of Shewanella woodyi (strain ATCC 51908 / MS32).